A 240-amino-acid chain; its full sequence is Inhibitor of growth protein 5 (240 aa).

Lys114 is modified (N6-acetyllysine). The interval 116–165 (EGSDFESSGGRGLKKGRGQKEKRGSRGRGRRTSEEDTPKKKKHKGGSEFT) is disordered. The residue at position 118 (Ser118) is a Phosphoserine. Arg126 carries the post-translational modification Omega-N-methylarginine. Residues 186-235 (PTYCLCHQVSYGEMIGCDNPDCPIEWFHFACVDLTTKPKGKWFCPRCVQE) form a PHD-type zinc finger. Residues Cys189, Cys191, Cys202, Cys207, His213, Cys216, Cys229, and Cys232 each coordinate Zn(2+).

This sequence belongs to the ING family. As to quaternary structure, component of the HBO1 complex composed of KAT7/HBO1, MEAF6, ING5, and one scaffold subunit: complexes containing BRPF scaffold (BRPF1, BRD1/BRPF2 or BRPF3) direct KAT7/HBO1 specificity towards H3K14ac, while complexes containing JADE scaffold (JADE1, JADE2 and JADE3) mediate acetylation of histone H4. Component of the MOZ/MORF complex composed at least of ING5, KAT6A, KAT6B, MEAF6 and one of BRPF1, BRD1/BRPF2 and BRPF3. Interacts with H3K4me3 and to a lesser extent with H3K4me2. Interacts with EP300 and p53/TP53. Interacts with INCA1. In terms of tissue distribution, down-regulated in bone marrow cells in acute myeloid leukemia patients as compared with normal bone marrow cells.

It is found in the nucleus. The protein localises to the chromosome. Functionally, component of the HBO1 complex, which specifically mediates acetylation of histone H3 at 'Lys-14' (H3K14ac) and, to a lower extent, acetylation of histone H4. Component of the MOZ/MORF complex which has a histone H3 acetyltransferase activity. Through chromatin acetylation it may regulate DNA replication and may function as a transcriptional coactivator. Inhibits cell growth, induces a delay in S-phase progression and enhances Fas-induced apoptosis in an INCA1-dependent manner. This chain is Inhibitor of growth protein 5 (ING5), found in Homo sapiens (Human).